Here is a 211-residue protein sequence, read N- to C-terminus: Arginine exporter protein ArgO (211 aa).

The next 6 helical transmembrane spans lie at 1–21 (MFTY…PLGP), 37–57 (LMIA…GIFG), 68–88 (LLAL…FGAL), 111–131 (IIIT…DTFV), 147–167 (WFAL…ALLA), and 179–199 (AQRI…FQLA).

Belongs to the LysE/ArgO transporter (TC 2.A.75) family.

It is found in the cell inner membrane. It catalyses the reaction L-arginine(in) = L-arginine(out). Its function is as follows. Involved in the export of arginine. Important to control the intracellular level of arginine and the correct balance between arginine and lysine. In Klebsiella pneumoniae subsp. pneumoniae (strain ATCC 700721 / MGH 78578), this protein is Arginine exporter protein ArgO.